The chain runs to 285 residues: uncharacterized protein (285 aa).

A helical transmembrane segment spans residues 6-26 (IKYFSTIIVAVVAVLAGWWLW).

The protein belongs to the membrane fusion protein (MFP) (TC 8.A.1) family.

The protein localises to the membrane. This is an uncharacterized protein from Escherichia coli (strain K12).